We begin with the raw amino-acid sequence, 388 residues long: Pre-mRNA-splicing factor cwf2 (388 aa).

The disordered stretch occupies residues 43–63; that stretch reads VKRKKQPARKQIETRPEYEME. A C3H1-type zinc finger spans residues 111–138; sequence NPGSFFCLYFARGMCSEGSKCEYLHRLP. Residues 174 to 248 form the RRM domain; sequence YTLYVGGITP…ECLNVRWATT (75 aa). Residues 331 to 352 are disordered; that stretch reads PNKSQSEEGSNDDHKSVTTTES.

Belongs to the RRM CWC2 family. In terms of assembly, belongs to the 40S cdc5-associated complex (or cwf complex), a spliceosome sub-complex reminiscent of a late-stage spliceosome composed of the U2, U5 and U6 snRNAs and at least brr2, cdc5, cwf2/prp3, cwf3/syf1, cwf4/syf3, cwf5/ecm2, spp42/cwf6, cwf7/spf27, cwf8, cwf9, cwf10, cwf11, cwf12, prp45/cwf13, cwf14, cwf15, cwf16, cwf17, cwf18, cwf19, cwf20, cwf21, cwf22, cwf23, cwf24, cwf25, cwf26, cyp7/cwf27, cwf28, cwf29/ist3, lea1, msl1, prp5/cwf1, prp10, prp12/sap130, prp17, prp22, sap61, sap62, sap114, sap145, slu7, smb1, smd1, smd3, smf1, smg1 and syf2.

The protein resides in the nucleus. In terms of biological role, involved in the first step of pre-mRNA splicing. Required for cell growth and cell cycle control. Plays a role in the levels of the U1, U4, U5 and U6 snRNAs and the maintenance of the U4/U6 snRNA complex. May provide the link between the 'nineteen complex' NTC spliceosome protein complex and the spliceosome through the U6 snRNA. Associates predominantly with U6 snRNAs in assembled active spliceosomes. Binds directly to the internal stem-loop (ISL) domain of the U6 snRNA and to the pre-mRNA intron near the 5' splice site during the activation and catalytic phases of the spliceosome cycle. Involved in pre-mRNA splicing. The chain is Pre-mRNA-splicing factor cwf2 (cwf2) from Schizosaccharomyces pombe (strain 972 / ATCC 24843) (Fission yeast).